We begin with the raw amino-acid sequence, 115 residues long: MLWFQGKSLQIAKSSFGLLRNLSASNRALPVLTLFTKAPCPLCDEAKEVLQPYKDRFILQEVDITLPENSTWYERYKFDIPVFHLNGQFLMMHRVNTSKLEKQLRKLEQQVLATN.

Cysteines 40 and 43 form a disulfide.

The protein belongs to the glutaredoxin family. YDR286C subfamily.

The protein is Glutaredoxin-like protein C5orf63 homolog of Mus musculus (Mouse).